The sequence spans 159 residues: Probable inactive acireductone dioxygenase 1 (159 aa).

It belongs to the acireductone dioxygenase (ARD) family.

The protein localises to the cytoplasm. It localises to the nucleus. Functionally, probable inactive acireductone dioxygenase. This Caenorhabditis elegans protein is Probable inactive acireductone dioxygenase 1.